We begin with the raw amino-acid sequence, 350 residues long: Phenylalanine--tRNA ligase alpha subunit (350 aa).

Mg(2+) is bound at residue Glu-271.

The protein belongs to the class-II aminoacyl-tRNA synthetase family. Phe-tRNA synthetase alpha subunit type 1 subfamily. As to quaternary structure, tetramer of two alpha and two beta subunits. Mg(2+) is required as a cofactor.

It is found in the cytoplasm. It catalyses the reaction tRNA(Phe) + L-phenylalanine + ATP = L-phenylalanyl-tRNA(Phe) + AMP + diphosphate + H(+). This chain is Phenylalanine--tRNA ligase alpha subunit, found in Acidovorax ebreus (strain TPSY) (Diaphorobacter sp. (strain TPSY)).